The sequence spans 287 residues: MAVGKEIRNQIGSIKSTQKITSAMEMVAASKMRKAQERMQATRPYAEKMRQVIGHIAKSNKDYRHPFMQEREVKRVGYIVVSSDRGLCGGLNTNAFKLLVREMREWKQQGIETDICAIGQKGASFFRNYGGNVVAAVTHLGDSPSADQLIGSVKVMLDSFVEGKIDRLFLISNEFVNTMTQSPKALQLLPLPEGDDEEIGHQWDYIYEPDSRPILDGLMPRYIESQVYQGVVENLACEQAARMIAMKSATDNAGSIIDELQLAYNKARQAAITQEISEIVSGAASVG.

This sequence belongs to the ATPase gamma chain family. As to quaternary structure, F-type ATPases have 2 components, CF(1) - the catalytic core - and CF(0) - the membrane proton channel. CF(1) has five subunits: alpha(3), beta(3), gamma(1), delta(1), epsilon(1). CF(0) has three main subunits: a, b and c.

Its subcellular location is the cell inner membrane. Its function is as follows. Produces ATP from ADP in the presence of a proton gradient across the membrane. The gamma chain is believed to be important in regulating ATPase activity and the flow of protons through the CF(0) complex. This is ATP synthase gamma chain from Marinobacter nauticus (strain ATCC 700491 / DSM 11845 / VT8) (Marinobacter aquaeolei).